The primary structure comprises 145 residues: Large ribosomal subunit protein bL9 (145 aa).

Belongs to the bacterial ribosomal protein bL9 family.

Binds to the 23S rRNA. The polypeptide is Large ribosomal subunit protein bL9 (Ureaplasma urealyticum serovar 10 (strain ATCC 33699 / Western)).